A 124-amino-acid chain; its full sequence is Small ribosomal subunit protein uS12 (124 aa).

Positions 1–24 (MTTINQLVRKPRQATTYKSASPAL) are disordered. Aspartate 89 is subject to 3-methylthioaspartic acid.

Belongs to the universal ribosomal protein uS12 family. Part of the 30S ribosomal subunit. Contacts proteins S8 and S17. May interact with IF1 in the 30S initiation complex.

Its function is as follows. With S4 and S5 plays an important role in translational accuracy. Interacts with and stabilizes bases of the 16S rRNA that are involved in tRNA selection in the A site and with the mRNA backbone. Located at the interface of the 30S and 50S subunits, it traverses the body of the 30S subunit contacting proteins on the other side and probably holding the rRNA structure together. The combined cluster of proteins S8, S12 and S17 appears to hold together the shoulder and platform of the 30S subunit. This chain is Small ribosomal subunit protein uS12, found in Xanthomonas axonopodis pv. citri (strain 306).